Consider the following 843-residue polypeptide: Glycogen phosphorylase, muscle form (843 aa).

N-acetylserine is present on Ser-2. Position 15 is a phosphoserine; by PHK; in form phosphorylase A (Ser-15). AMP contacts are provided by Asp-43 and Tyr-76. Phosphotyrosine is present on residues Tyr-204 and Tyr-227. 310-319 contributes to the AMP binding site; that stretch reads RRFKSSKFGC. Ser-430 carries the phosphoserine modification. A Phosphotyrosine modification is found at Tyr-473. Ser-514 carries the post-translational modification Phosphoserine. Lys-681 is subject to N6-(pyridoxal phosphate)lysine. Phosphoserine is present on residues Ser-747 and Ser-748.

The protein belongs to the glycogen phosphorylase family. In terms of assembly, homodimer. Homotetramer; to form the enzymatically active phosphorylase A. Pyridoxal 5'-phosphate is required as a cofactor. In terms of processing, phosphorylation of Ser-15 converts phosphorylase B (unphosphorylated) to phosphorylase A.

The catalysed reaction is [(1-&gt;4)-alpha-D-glucosyl](n) + phosphate = [(1-&gt;4)-alpha-D-glucosyl](n-1) + alpha-D-glucose 1-phosphate. Its activity is regulated as follows. Allosterically regulated through the non-covalent binding of metabolites, being activated by AMP and inhibited by ATP, ADP, and glucose-6-phosphate. The activity is also controlled by post-translational modifications including phosphorylation. Functionally, allosteric enzyme that catalyzes the rate-limiting step in glycogen catabolism, the phosphorolytic cleavage of glycogen to produce glucose-1-phosphate, and plays a central role in maintaining cellular and organismal glucose homeostasis. The sequence is that of Glycogen phosphorylase, muscle form from Oryctolagus cuniculus (Rabbit).